The primary structure comprises 207 residues: Putative 3-methyladenine DNA glycosylase (207 aa).

It belongs to the DNA glycosylase MPG family.

The protein is Putative 3-methyladenine DNA glycosylase of Koribacter versatilis (strain Ellin345).